Consider the following 216-residue polypeptide: Adenylate kinase (216 aa).

Position 10–15 (Gly-10–Thr-15) interacts with ATP. An NMP region spans residues Ser-30–Val-59. AMP is bound by residues Thr-31, Arg-36, Leu-57–Val-59, Gly-85–Arg-88, and Gln-92. Residues Gly-126–Asp-163 are LID. ATP is bound at residue Arg-127. 2 residues coordinate Zn(2+): Cys-130 and Cys-133. Residue Thr-136 to Tyr-137 coordinates ATP. Zn(2+) is bound by residues Cys-150 and Cys-153. AMP-binding residues include Arg-160 and Arg-171. Gln-199 is a binding site for ATP.

The protein belongs to the adenylate kinase family. As to quaternary structure, monomer.

Its subcellular location is the cytoplasm. It carries out the reaction AMP + ATP = 2 ADP. It participates in purine metabolism; AMP biosynthesis via salvage pathway; AMP from ADP: step 1/1. In terms of biological role, catalyzes the reversible transfer of the terminal phosphate group between ATP and AMP. Plays an important role in cellular energy homeostasis and in adenine nucleotide metabolism. The chain is Adenylate kinase from Clostridioides difficile (strain 630) (Peptoclostridium difficile).